The chain runs to 443 residues: Thymidine phosphorylase (443 aa).

It belongs to the thymidine/pyrimidine-nucleoside phosphorylase family. Homodimer.

The catalysed reaction is thymidine + phosphate = 2-deoxy-alpha-D-ribose 1-phosphate + thymine. It participates in pyrimidine metabolism; dTMP biosynthesis via salvage pathway; dTMP from thymine: step 1/2. Functionally, the enzymes which catalyze the reversible phosphorolysis of pyrimidine nucleosides are involved in the degradation of these compounds and in their utilization as carbon and energy sources, or in the rescue of pyrimidine bases for nucleotide synthesis. The sequence is that of Thymidine phosphorylase from Shewanella pealeana (strain ATCC 700345 / ANG-SQ1).